Consider the following 149-residue polypeptide: MAAKVEPFWIRKTLDQLSTEEWESLCDGCGLCCLQKLEDEEDNSVYYTRIACKLLDLTTCQCSDYANRRASVPDCIQLTPGQADEFKWLPPTCGYRLVSEGKDLPLWHHLVCGDRTAVHHERISQSGRMLSENSVAEDDWEDYLIFRAG.

It belongs to the UPF0260 family.

The sequence is that of UPF0260 protein PSPPH_1551 from Pseudomonas savastanoi pv. phaseolicola (strain 1448A / Race 6) (Pseudomonas syringae pv. phaseolicola (strain 1448A / Race 6)).